The sequence spans 306 residues: Polyisoprenyl-teichoic acid--peptidoglycan teichoic acid transferase TagU (306 aa).

The Cytoplasmic segment spans residues 1–11 (MRAEKRKKKKK). A helical; Signal-anchor for type II membrane protein transmembrane segment spans residues 12–32 (ILYTIIALIGIFVLSTGSYAY). Residues 33–306 (YLWHKAASTV…TAELKESLNK (274 aa)) lie on the Extracellular side of the membrane.

Belongs to the LytR/CpsA/Psr (LCP) family.

Its subcellular location is the cell membrane. It functions in the pathway cell wall biogenesis. Functionally, may catalyze the final step in cell wall teichoic acid biosynthesis, the transfer of the anionic cell wall polymers (APs) from their lipid-linked precursor to the cell wall peptidoglycan (PG). The protein is Polyisoprenyl-teichoic acid--peptidoglycan teichoic acid transferase TagU of Bacillus licheniformis (strain ATCC 14580 / DSM 13 / JCM 2505 / CCUG 7422 / NBRC 12200 / NCIMB 9375 / NCTC 10341 / NRRL NRS-1264 / Gibson 46).